Reading from the N-terminus, the 508-residue chain is Putative inorganic phosphate transporter 1-13 (508 aa).

The Cytoplasmic segment spans residues 1–22 (MAGNQQLRVLHALDIARTQLYH). Residues 23-43 (FIAIVIAGMGFFTDAYDLFSI) traverse the membrane as a helical segment. Over 44-64 (SLVADLLGHVYYHGELPRNIH) the chain is Extracellular. A helical transmembrane segment spans residues 65 to 85 (AAVTGIALCGTVPGQLVFGWL). Residues 86 to 93 (GDKMGRKR) are Cytoplasmic-facing. A helical membrane pass occupies residues 94–114 (VYGITLLLMVVSSLASGLSFS). Over 115 to 117 (KHE) the chain is Extracellular. The helical transmembrane segment at 118–138 (GMNIIAVLCFFRFWLGVSIGG) threads the bilayer. Residues 139–159 (DYPLSATIMSEYANKRTRGAF) are Cytoplasmic-facing. The helical transmembrane segment at 160 to 180 (IAAVFAMQGFGNLAAGIIGMI) threads the bilayer. The Extracellular portion of the chain corresponds to 181–192 (VSAAFKHSSASK). The helical transmembrane segment at 193-213 (IDYAWRIILMFGAIPAALTYH) threads the bilayer. Topologically, residues 214-277 (WRMKMPETAR…FEFLHRHGLH (64 aa)) are cytoplasmic. Residues 278–298 (LLGTTVCWFVLDVTFYSLNIF) form a helical membrane-spanning segment. The Extracellular segment spans residues 299-328 (MKNIFTEVGLLPRLDSEYHHTLQRMITMTA). A helical membrane pass occupies residues 329 to 349 (VHTFISLCGALPGYFFTVAFV). The Cytoplasmic portion of the chain corresponds to 350-354 (DRIGR). A helical transmembrane segment spans residues 355–375 (VKIQLIGFTMMTVFMLCLAIP). Over 376–389 (YDQWLRHKNKYGFA) the chain is Extracellular. A helical membrane pass occupies residues 390–410 (VMYGLTFFFANFGPNTTTFII). Residues 411–424 (PAEIFPARLRSTCH) lie on the Cytoplasmic side of the membrane. A helical membrane pass occupies residues 425–445 (GISGAVGKIGAIVGVFGFLYT). Residues 446–450 (EYHIR) lie on the Extracellular side of the membrane. A helical membrane pass occupies residues 451-471 (IFLFVLIGCNLVGFIFTLLLP). Over 472-508 (ESKGKSLEDLTGEIEEFQEEDEGSEVALSRPIHTVPL) the chain is Cytoplasmic.

Belongs to the major facilitator superfamily. Phosphate:H(+) symporter (TC 2.A.1.9) family.

It localises to the membrane. Its function is as follows. High-affinity transporter for external inorganic phosphate. The protein is Putative inorganic phosphate transporter 1-13 (PHT1-13) of Oryza sativa subsp. japonica (Rice).